Here is a 785-residue protein sequence, read N- to C-terminus: Penicillin-binding protein 1A (785 aa).

The tract at residues 1-61 is disordered; that stretch reads MPPDDRLTAV…SGPGGPSGPG (61 aa). Residues 33 to 45 show a composition bias toward pro residues; sequence SPPPKPPPPPPPG. Residues 46–59 show a composition bias toward gly residues; it reads RGGGGPSGPGGPSG. A helical membrane pass occupies residues 77–97; sequence IAVAVMVLLPLITFGMAYMIV. Positions 118-299 are transglycosylase; that stretch reads GSEIARIVPP…RWNWVLDGMV (182 aa). The Proton donor; for transglycosylase activity role is filled by glutamate 151. The transpeptidase stretch occupies residues 392-662; that stretch reads AVVSIDPRTG…EGVKPLVNKW (271 aa). Serine 426 functions as the Acyl-ester intermediate; for transpeptidase activity in the catalytic mechanism. Disordered regions lie at residues 605–626, 690–726, and 738–785; these read SRGH…VQLG, ESFP…QPSV, and GITI…PPPP. Composition is skewed to pro residues over residues 708 to 721 and 743 to 758; these read PAAP…PTDP and IGPP…PGAP. The span at 759–775 shows a compositional bias: low complexity; it reads GAPVGPGAPEVPVAPGA.

The protein resides in the cell membrane. The enzyme catalyses [GlcNAc-(1-&gt;4)-Mur2Ac(oyl-L-Ala-gamma-D-Glu-L-Lys-D-Ala-D-Ala)](n)-di-trans,octa-cis-undecaprenyl diphosphate + beta-D-GlcNAc-(1-&gt;4)-Mur2Ac(oyl-L-Ala-gamma-D-Glu-L-Lys-D-Ala-D-Ala)-di-trans,octa-cis-undecaprenyl diphosphate = [GlcNAc-(1-&gt;4)-Mur2Ac(oyl-L-Ala-gamma-D-Glu-L-Lys-D-Ala-D-Ala)](n+1)-di-trans,octa-cis-undecaprenyl diphosphate + di-trans,octa-cis-undecaprenyl diphosphate + H(+). It carries out the reaction Preferential cleavage: (Ac)2-L-Lys-D-Ala-|-D-Ala. Also transpeptidation of peptidyl-alanyl moieties that are N-acyl substituents of D-alanine.. The protein operates within cell wall biogenesis; peptidoglycan biosynthesis. In terms of biological role, cell wall formation. Synthesis of cross-linked peptidoglycan from the lipid intermediates. The enzyme has a penicillin-insensitive transglycosylase N-terminal domain (formation of linear glycan strands) and a penicillin-sensitive transpeptidase C-terminal domain (cross-linking of the peptide subunits). In Mycolicibacterium smegmatis (strain ATCC 700084 / mc(2)155) (Mycobacterium smegmatis), this protein is Penicillin-binding protein 1A (ponA1).